Here is a 326-residue protein sequence, read N- to C-terminus: Probable cell division protein WhiA (326 aa).

A DNA-binding region (H-T-H motif) is located at residues 275-308 (SLDELGHHADPPMTKDAVAGRIRRLLAMADKKAV).

The protein belongs to the WhiA family.

Involved in cell division and chromosome segregation. In Clavibacter michiganensis subsp. michiganensis (strain NCPPB 382), this protein is Probable cell division protein WhiA.